A 128-amino-acid polypeptide reads, in one-letter code: Ribosome-binding factor A (128 aa).

It belongs to the RbfA family. As to quaternary structure, monomer. Binds 30S ribosomal subunits, but not 50S ribosomal subunits or 70S ribosomes.

The protein localises to the cytoplasm. One of several proteins that assist in the late maturation steps of the functional core of the 30S ribosomal subunit. Associates with free 30S ribosomal subunits (but not with 30S subunits that are part of 70S ribosomes or polysomes). Required for efficient processing of 16S rRNA. May interact with the 5'-terminal helix region of 16S rRNA. This Geobacillus thermodenitrificans (strain NG80-2) protein is Ribosome-binding factor A.